We begin with the raw amino-acid sequence, 207 residues long: Thiamine-phosphate synthase (207 aa).

4-amino-2-methyl-5-(diphosphooxymethyl)pyrimidine contacts are provided by residues 35 to 39 and Asn67; that span reads QYRDK. Positions 68 and 86 each coordinate Mg(2+). Thr105 serves as a coordination point for 4-amino-2-methyl-5-(diphosphooxymethyl)pyrimidine. Residue 132 to 134 participates in 2-[(2R,5Z)-2-carboxy-4-methylthiazol-5(2H)-ylidene]ethyl phosphate binding; that stretch reads SVT. Residue Lys135 participates in 4-amino-2-methyl-5-(diphosphooxymethyl)pyrimidine binding. Position 162 (Gly162) interacts with 2-[(2R,5Z)-2-carboxy-4-methylthiazol-5(2H)-ylidene]ethyl phosphate.

It belongs to the thiamine-phosphate synthase family. The cofactor is Mg(2+).

The catalysed reaction is 2-[(2R,5Z)-2-carboxy-4-methylthiazol-5(2H)-ylidene]ethyl phosphate + 4-amino-2-methyl-5-(diphosphooxymethyl)pyrimidine + 2 H(+) = thiamine phosphate + CO2 + diphosphate. It carries out the reaction 2-(2-carboxy-4-methylthiazol-5-yl)ethyl phosphate + 4-amino-2-methyl-5-(diphosphooxymethyl)pyrimidine + 2 H(+) = thiamine phosphate + CO2 + diphosphate. The enzyme catalyses 4-methyl-5-(2-phosphooxyethyl)-thiazole + 4-amino-2-methyl-5-(diphosphooxymethyl)pyrimidine + H(+) = thiamine phosphate + diphosphate. The protein operates within cofactor biosynthesis; thiamine diphosphate biosynthesis; thiamine phosphate from 4-amino-2-methyl-5-diphosphomethylpyrimidine and 4-methyl-5-(2-phosphoethyl)-thiazole: step 1/1. In terms of biological role, condenses 4-methyl-5-(beta-hydroxyethyl)thiazole monophosphate (THZ-P) and 2-methyl-4-amino-5-hydroxymethyl pyrimidine pyrophosphate (HMP-PP) to form thiamine monophosphate (TMP). In Pseudomonas putida (strain ATCC 700007 / DSM 6899 / JCM 31910 / BCRC 17059 / LMG 24140 / F1), this protein is Thiamine-phosphate synthase.